A 115-amino-acid chain; its full sequence is MADTLLKCTTRHVRLFTARVDNDDLVPSANELTLDLDPDNEFIWSESCISQVQQRFKQLVDAAAGGELSDYTLRRIGTDLEGFIRQLLQRGELSYNPEARVQNFSMGLPRTPELL.

Belongs to the complex I NdhM subunit family. As to quaternary structure, NDH-1 can be composed of about 15 different subunits; different subcomplexes with different compositions have been identified which probably have different functions.

The protein resides in the cellular thylakoid membrane. It carries out the reaction a plastoquinone + NADH + (n+1) H(+)(in) = a plastoquinol + NAD(+) + n H(+)(out). The enzyme catalyses a plastoquinone + NADPH + (n+1) H(+)(in) = a plastoquinol + NADP(+) + n H(+)(out). Functionally, NDH-1 shuttles electrons from an unknown electron donor, via FMN and iron-sulfur (Fe-S) centers, to quinones in the respiratory and/or the photosynthetic chain. The immediate electron acceptor for the enzyme in this species is believed to be plastoquinone. Couples the redox reaction to proton translocation, and thus conserves the redox energy in a proton gradient. Cyanobacterial NDH-1 also plays a role in inorganic carbon-concentration. The chain is NAD(P)H-quinone oxidoreductase subunit M from Synechococcus sp. (strain CC9902).